Here is a 146-residue protein sequence, read N- to C-terminus: Probable U6 snRNA-associated Sm-like protein LSm4 (146 aa).

In terms of domain architecture, Sm spans 2-75 (LPLSLLKTAQ…IKYLRVPDEV (74 aa)). Basic and acidic residues predominate over residues 80 to 91 (QEEAKSRTDRKP). Residues 80–146 (QEEAKSRTDR…GGRGGGRGRG (67 aa)) are disordered. Residues 137-146 (GGRGGGRGRG) are compositionally biased toward gly residues.

This sequence belongs to the snRNP Sm proteins family. LSm subunits form a heteromer with a doughnut shape.

Its subcellular location is the nucleus. Binds specifically to the 3'-terminal U-tract of U6 snRNA. The protein is Probable U6 snRNA-associated Sm-like protein LSm4 of Nicotiana tabacum (Common tobacco).